Here is a 316-residue protein sequence, read N- to C-terminus: tRNA dimethylallyltransferase (316 aa).

An ATP-binding site is contributed by 17–24; sequence GPTASGKT. Position 19–24 (19–24) interacts with substrate; that stretch reads TASGKT. 3 interaction with substrate tRNA regions span residues 42 to 45, 166 to 170, and 247 to 252; these read DSAL, QRLSR, and RCVGYR.

This sequence belongs to the IPP transferase family. In terms of assembly, monomer. Requires Mg(2+) as cofactor.

The catalysed reaction is adenosine(37) in tRNA + dimethylallyl diphosphate = N(6)-dimethylallyladenosine(37) in tRNA + diphosphate. In terms of biological role, catalyzes the transfer of a dimethylallyl group onto the adenine at position 37 in tRNAs that read codons beginning with uridine, leading to the formation of N6-(dimethylallyl)adenosine (i(6)A). The polypeptide is tRNA dimethylallyltransferase (Salmonella enteritidis PT4 (strain P125109)).